Reading from the N-terminus, the 514-residue chain is 2,3-bisphosphoglycerate-independent phosphoglycerate mutase (514 aa).

Aspartate 13 and serine 63 together coordinate Mn(2+). Serine 63 acts as the Phosphoserine intermediate in catalysis. Residues histidine 124, 154 to 155 (RD), arginine 186, arginine 192, 258 to 261 (RADR), and lysine 332 each bind substrate. Mn(2+) is bound by residues aspartate 399, histidine 403, aspartate 440, histidine 441, and histidine 459.

Belongs to the BPG-independent phosphoglycerate mutase family. As to quaternary structure, monomer. Mn(2+) is required as a cofactor.

It catalyses the reaction (2R)-2-phosphoglycerate = (2R)-3-phosphoglycerate. Its pathway is carbohydrate degradation; glycolysis; pyruvate from D-glyceraldehyde 3-phosphate: step 3/5. In terms of biological role, catalyzes the interconversion of 2-phosphoglycerate and 3-phosphoglycerate. This is 2,3-bisphosphoglycerate-independent phosphoglycerate mutase from Legionella pneumophila subsp. pneumophila (strain Philadelphia 1 / ATCC 33152 / DSM 7513).